Reading from the N-terminus, the 60-residue chain is Large ribosomal subunit protein uL30 (60 aa).

The protein belongs to the universal ribosomal protein uL30 family. As to quaternary structure, part of the 50S ribosomal subunit.

This Burkholderia mallei (strain NCTC 10247) protein is Large ribosomal subunit protein uL30.